Here is a 526-residue protein sequence, read N- to C-terminus: Peptide chain release factor 3 (526 aa).

The 269-residue stretch at 9 to 277 (DKRRTFAIIS…GIVEWAPIPQ (269 aa)) folds into the tr-type G domain. GTP is bound by residues 18–25 (SHPDAGKT), 86–90 (DTPGH), and 140–143 (NKLD).

Belongs to the TRAFAC class translation factor GTPase superfamily. Classic translation factor GTPase family. PrfC subfamily.

The protein resides in the cytoplasm. In terms of biological role, increases the formation of ribosomal termination complexes and stimulates activities of RF-1 and RF-2. It binds guanine nucleotides and has strong preference for UGA stop codons. It may interact directly with the ribosome. The stimulation of RF-1 and RF-2 is significantly reduced by GTP and GDP, but not by GMP. This Shewanella halifaxensis (strain HAW-EB4) protein is Peptide chain release factor 3.